The primary structure comprises 438 residues: Putative F-box protein At5g15660 (438 aa).

Residues 1 to 24 form a disordered region; that stretch reads MRRRSKKIKTENNSNPETSEERNK. The 47-residue stretch at 22-68 folds into the F-box domain; it reads RNKFDEIPHDLVIEILERLPLKSVARFLTVSKLWATTIRSPDFRKSY.

The sequence is that of Putative F-box protein At5g15660 from Arabidopsis thaliana (Mouse-ear cress).